Reading from the N-terminus, the 162-residue chain is Caveolin-2 (162 aa).

At 1 to 86 (MGLETEKADV…FEISKYVMYK (86 aa)) the chain is on the cytoplasmic side. The residue at position 19 (Tyr-19) is a Phosphotyrosine; by SRC. 2 positions are modified to phosphoserine: Ser-20 and Ser-23. Tyr-27 is modified (phosphotyrosine; by SRC). Position 36 is a phosphoserine (Ser-36). Positions 87 to 107 (FLTVFLAIPLAFIAGILFATL) form an intramembrane region, helical. Over 108-162 (SCLHIWILMPFVKTCLMVLPSVQTIWKSVTDVFIAPLCTSVGRSFSSVSLQLSQD) the chain is Cytoplasmic.

Belongs to the caveolin family. Monomer or homodimer. Interacts with CAV1; the interaction forms a stable heterooligomeric complex that is required for targeting to lipid rafts and for caveolae formation. Tyrosine phosphorylated forms do not form heterooligomers with the Tyr-19-phosphorylated form existing as a monomer or dimer, and the Tyr-27-form as a monomer only. Interacts (tyrosine phosphorylated form) with the SH2 domain-containing proteins, RASA1, NCK1 and SRC. Interacts (tyrosine phosphorylated form) with INSR, the interaction (Tyr-27-phosphorylated form) is increased on insulin stimulation. Interacts (Tyr-19 phosphorylated form) with MAPK1 (phosphorylated form); the interaction, promoted by insulin, leads to nuclear location and MAPK1 activation. Interacts with STAT3; the interaction is increased on insulin-induced tyrosine phosphorylation leading to STAT activation. Phosphorylated on serine and tyrosine residues. CAV1 promotes phosphorylation on Ser-23 which then targets the complex to the plasma membrane, lipid rafts and caveolae. Phosphorylation on Ser-36 appears to modulate mitosis in endothelial cells. Phosphorylation on both Tyr-19 and Tyr-27 is required for insulin-induced 'Ser-727' phosphorylation of STAT3 and its activation. Phosphorylation on Tyr-19 is required for insulin-induced phosphorylation of MAPK1 and DNA binding of STAT3. Tyrosine phosphorylation is induced by both EGF and insulin (By. similarity).

It localises to the nucleus. The protein localises to the cytoplasm. The protein resides in the golgi apparatus membrane. Its subcellular location is the cell membrane. It is found in the membrane. It localises to the caveola. Its function is as follows. May act as a scaffolding protein within caveolar membranes. Interacts directly with G-protein alpha subunits and can functionally regulate their activity. Acts as an accessory protein in conjunction with CAV1 in targeting to lipid rafts and driving caveolae formation. The Ser-36 phosphorylated form has a role in modulating mitosis in endothelial cells. Positive regulator of cellular mitogenesis of the MAPK signaling pathway. Required for the insulin-stimulated nuclear translocation and activation of MAPK1 and STAT3, and the subsequent regulation of cell cycle progression. The sequence is that of Caveolin-2 (CAV2) from Chlorocebus aethiops (Green monkey).